We begin with the raw amino-acid sequence, 475 residues long: Ribulose bisphosphate carboxylase large chain (475 aa).

The propeptide occupies 1–2; sequence MS. Pro3 is subject to N-acetylproline. Residue Lys14 is modified to N6,N6,N6-trimethyllysine. Substrate-binding residues include Asn123 and Thr173. The active-site Proton acceptor is the Lys175. Lys177 provides a ligand contact to substrate. Positions 201, 203, and 204 each coordinate Mg(2+). An N6-carboxylysine modification is found at Lys201. Residue His294 is the Proton acceptor of the active site. Substrate-binding residues include Arg295, His327, and Ser379.

The protein belongs to the RuBisCO large chain family. Type I subfamily. In terms of assembly, heterohexadecamer of 8 large chains and 8 small chains; disulfide-linked. The disulfide link is formed within the large subunit homodimers. Mg(2+) serves as cofactor. Post-translationally, the disulfide bond which can form in the large chain dimeric partners within the hexadecamer appears to be associated with oxidative stress and protein turnover.

The protein resides in the plastid. Its subcellular location is the chloroplast. The catalysed reaction is 2 (2R)-3-phosphoglycerate + 2 H(+) = D-ribulose 1,5-bisphosphate + CO2 + H2O. It carries out the reaction D-ribulose 1,5-bisphosphate + O2 = 2-phosphoglycolate + (2R)-3-phosphoglycerate + 2 H(+). Its function is as follows. RuBisCO catalyzes two reactions: the carboxylation of D-ribulose 1,5-bisphosphate, the primary event in carbon dioxide fixation, as well as the oxidative fragmentation of the pentose substrate in the photorespiration process. Both reactions occur simultaneously and in competition at the same active site. This Cycas taitungensis (Prince sago) protein is Ribulose bisphosphate carboxylase large chain.